Reading from the N-terminus, the 106-residue chain is Large ribosomal subunit protein eL42 (106 aa).

The protein belongs to the eukaryotic ribosomal protein eL42 family.

This Wickerhamomyces ciferrii (strain ATCC 14091 / BCRC 22168 / CBS 111 / JCM 3599 / NBRC 0793 / NRRL Y-1031 F-60-10) (Yeast) protein is Large ribosomal subunit protein eL42 (RPL44).